Reading from the N-terminus, the 152-residue chain is Neuromedin-S (152 aa).

The first 26 residues, 1–26 (MKHPFPQFPPILVIYCFCMLQIPSSG), serve as a signal peptide directing secretion. 3 consecutive propeptides follow at residues 27–69 (ASPP…VYKR), 70–105 (FLFH…PSRR), and 106–108 (MKR). N144 carries the asparagine amide modification. Residues 147-152 (YTDKVQ) constitute a propeptide that is removed on maturation.

It belongs to the NmU family. In terms of tissue distribution, expressed in the CNS, spleen and testis. Specifically expressed in the suprachiasmatic nuclei (SCN) of the hypothalamus.

The protein resides in the secreted. Its function is as follows. Implicated in the regulation of circadian rhythms through autocrine and/or paracrine actions. Stimulates the contraction of rectum and elevation of blood pressure. The protein is Neuromedin-S (Nms) of Rattus norvegicus (Rat).